The sequence spans 178 residues: Ribosome maturation factor RimM (178 aa).

The region spanning 99 to 178 (EGDYYWHDLI…TIEVDWDAGF (80 aa)) is the PRC barrel domain.

The protein belongs to the RimM family. Binds ribosomal protein uS19.

Its subcellular location is the cytoplasm. Its function is as follows. An accessory protein needed during the final step in the assembly of 30S ribosomal subunit, possibly for assembly of the head region. Essential for efficient processing of 16S rRNA. May be needed both before and after RbfA during the maturation of 16S rRNA. It has affinity for free ribosomal 30S subunits but not for 70S ribosomes. In Haemophilus influenzae (strain ATCC 51907 / DSM 11121 / KW20 / Rd), this protein is Ribosome maturation factor RimM.